The primary structure comprises 385 residues: Queuine tRNA-ribosyltransferase (385 aa).

Residue D92 is the Proton acceptor of the active site. Residues D92 to F96, D146, Q188, and G215 contribute to the substrate site. The tract at residues G246–D252 is RNA binding. Catalysis depends on D265, which acts as the Nucleophile. The interval T270–R274 is RNA binding; important for wobble base 34 recognition. Residues C303, C305, C308, and H334 each contribute to the Zn(2+) site.

Belongs to the queuine tRNA-ribosyltransferase family. Homodimer. Within each dimer, one monomer is responsible for RNA recognition and catalysis, while the other monomer binds to the replacement base PreQ1. Zn(2+) is required as a cofactor.

The enzyme catalyses 7-aminomethyl-7-carbaguanine + guanosine(34) in tRNA = 7-aminomethyl-7-carbaguanosine(34) in tRNA + guanine. It functions in the pathway tRNA modification; tRNA-queuosine biosynthesis. Functionally, catalyzes the base-exchange of a guanine (G) residue with the queuine precursor 7-aminomethyl-7-deazaguanine (PreQ1) at position 34 (anticodon wobble position) in tRNAs with GU(N) anticodons (tRNA-Asp, -Asn, -His and -Tyr). Catalysis occurs through a double-displacement mechanism. The nucleophile active site attacks the C1' of nucleotide 34 to detach the guanine base from the RNA, forming a covalent enzyme-RNA intermediate. The proton acceptor active site deprotonates the incoming PreQ1, allowing a nucleophilic attack on the C1' of the ribose to form the product. After dissociation, two additional enzymatic reactions on the tRNA convert PreQ1 to queuine (Q), resulting in the hypermodified nucleoside queuosine (7-(((4,5-cis-dihydroxy-2-cyclopenten-1-yl)amino)methyl)-7-deazaguanosine). The polypeptide is Queuine tRNA-ribosyltransferase (Thermus thermophilus (strain ATCC BAA-163 / DSM 7039 / HB27)).